We begin with the raw amino-acid sequence, 1588 residues long: uncharacterized protein (1588 aa).

Residues 486–495 show a composition bias toward basic and acidic residues; the sequence is RKRLTSKTED. Disordered regions lie at residues 486–515 and 1146–1176; these read RKRL…KRRP and GGQD…RELN. Polar residues predominate over residues 498–507; the sequence is NQWTRDCQNS. Over residues 1150-1169 the composition is skewed to low complexity; that stretch reads NVSDQSENQSENQSLESETS.

It is found in the virion. This is an uncharacterized protein from Acanthamoeba polyphaga (Amoeba).